The chain runs to 325 residues: L-lactate dehydrogenase (325 aa).

NAD(+)-binding positions include V19, D40, K45, Y70, and 84 to 85 (GA). Substrate contacts are provided by Q87 and R93. Residues T106, 123 to 125 (AAN), and S148 each bind NAD(+). A substrate-binding site is contributed by 125-128 (NPVD). 153–156 (DSAR) is a substrate binding site. Residues R158 and H173 each contribute to the beta-D-fructose 1,6-bisphosphate site. H180 functions as the Proton acceptor in the catalytic mechanism. A Phosphotyrosine modification is found at Y225. A substrate-binding site is contributed by T234.

This sequence belongs to the LDH/MDH superfamily. LDH family. As to quaternary structure, homotetramer.

The protein localises to the cytoplasm. It carries out the reaction (S)-lactate + NAD(+) = pyruvate + NADH + H(+). It functions in the pathway fermentation; pyruvate fermentation to lactate; (S)-lactate from pyruvate: step 1/1. Allosterically activated by fructose 1,6-bisphosphate (FBP). Functionally, catalyzes the conversion of lactate to pyruvate. This chain is L-lactate dehydrogenase, found in Latilactobacillus sakei subsp. sakei (strain 23K) (Lactobacillus sakei subsp. sakei).